Reading from the N-terminus, the 199-residue chain is Recombination protein RecR (199 aa).

The segment at C58–C73 adopts a C4-type zinc-finger fold. The region spanning T81–P176 is the Toprim domain.

Belongs to the RecR family.

Functionally, may play a role in DNA repair. It seems to be involved in an RecBC-independent recombinational process of DNA repair. It may act with RecF and RecO. The sequence is that of Recombination protein RecR from Ruminiclostridium cellulolyticum (strain ATCC 35319 / DSM 5812 / JCM 6584 / H10) (Clostridium cellulolyticum).